Consider the following 214-residue polypeptide: Ornithine decarboxylase antizyme 1 (214 aa).

The protein belongs to the ODC antizyme family. In terms of assembly, interacts with ODC1 and thereby sterically blocks ODC homodimerization.

Ornithine decarboxylase (ODC) antizyme protein that negatively regulates ODC activity and intracellular polyamine biosynthesis and uptake in response to increased intracellular polyamine levels. Binds to ODC monomers, inhibiting the assembly of the functional ODC homodimer, and targets the monomers for ubiquitin-independent proteolytic destruction by the 26S proteasome. The sequence is that of Ornithine decarboxylase antizyme 1 (oaz1a) from Danio rerio (Zebrafish).